Here is a 568-residue protein sequence, read N- to C-terminus: MRGIMAPKDIMTNTHAKSILNSMNSLRKSNTLCDVTLRVEQKDFPAHRIVLAACSDYFCAMFTSELSEKGKPYVDIQGLTASTMEILLDFVYTETVHVTVENVQELLPAACLLQLKGVKQACCEFLESQLDPSNCLGIRDFAETHNCVDLMQAAEVFSQKHFPEVVQHEEFILLSQGEVEKLIKCDEIQVDSEEPVFEAVISWVKHAKKEREGSLPDLLQYVRMPLLTPRYITDVIDTEPFIRCSLQCRDLVDEAKKFHLRPELRTQMQGPRTRAHIRANEVLLVVGGFGSQQSPIDVVEKYDPKTQEWSFLPSITRKRRYVASVSLHDRIYVIGGYDGRSRLSSVECLDYTADEDGVWYSVAPMNVRRGLAGATTLGDMIYVSGGFDGSRRHTSMERYDPNIDQWSMLGDMQTAREGAGLVVASGVIYCLGGYDGLNILNSVEKYDPHTGHWANVTPMATKRSGAGVALLNDHIYVVGGFDGTAHLSSVEAYNIRTDSWTTVTSMTTPRCYVGATVLRGRLYAIAGYDGNSSLSSIECYDPIIDSYGLVTSMGTQRCDAGVCALREK.

The 68-residue stretch at 33 to 100 (CDVTLRVEQK…VYTETVHVTV (68 aa)) folds into the BTB domain. The BACK domain maps to 135 to 236 (CLGIRDFAET…LTPRYITDVI (102 aa)). Kelch repeat units follow at residues 282–329 (VLLV…SLHD), 331–379 (IYVI…TLGD), 380–426 (MIYV…VASG), 427–473 (VIYC…LLND), 474–520 (HIYV…VLRG), and 522–567 (LYAI…ALRE).

As to quaternary structure, component of the BCR(KLHL12) E3 ubiquitin ligase complex, at least composed of CUL3 and KLHL12 and RBX1. This complex interacts with DVL3 upon activation of the Wnt signaling pathway by WNT3A. Interacts with DRD4, KLHL2 and SEC31A. Interacts with PEF1 and PDCD6/ALG-2; interaction takes place in response to cytosolic calcium increase and leads to bridge together the BCR(KLHL12) complex and SEC31 (SEC31A or SEC31B). Post-translationally, ubiquitinated by the SCF(FBXL17) complex, leading to its degradation by the proteasome: ubiquitination by the SCF(FBXL17) complex takes place when aberrant BTB domain dimers are formed.

Its subcellular location is the cytoplasmic vesicle. The protein resides in the COPII-coated vesicle. The protein operates within protein modification; protein ubiquitination. In terms of biological role, substrate-specific adapter of a BCR (BTB-CUL3-RBX1) E3 ubiquitin ligase complex that acts as a negative regulator of Wnt signaling pathway and ER-Golgi transport. The BCR(KLHL12) complex is involved in ER-Golgi transport by regulating the size of COPII coats, thereby playing a key role in collagen export, which is required for embryonic stem (ES) cells division: BCR(KLHL12) acts by mediating monoubiquitination of SEC31 (SEC31A or SEC31B). The BCR(KLHL12) complex is also involved in neural crest specification: in response to cytosolic calcium increase, interacts with the heterodimer formed with PEF1 and PDCD6/ALG-2, leading to bridge together the BCR(KLHL12) complex and SEC31 (SEC31A or SEC31B), promoting monoubiquitination of SEC31 and subsequent collagen export. As part of the BCR(KLHL12) complex, also acts as a negative regulator of the Wnt signaling pathway by mediating ubiquitination and subsequent proteolysis of DVL3. The BCR(KLHL12) complex also mediates polyubiquitination of DRD4 and PEF1, without leading to degradation of these proteins. This chain is Kelch-like protein 12 (KLHL12), found in Bos taurus (Bovine).